The primary structure comprises 276 residues: NH(3)-dependent NAD(+) synthetase (276 aa).

43-50 contributes to the ATP binding site; the sequence is GISGGVDS. Residue Asp49 participates in Mg(2+) binding. Arg146 contacts deamido-NAD(+). Thr166 contributes to the ATP binding site. Residue Glu171 coordinates Mg(2+). Lys179 and Asp186 together coordinate deamido-NAD(+). 2 residues coordinate ATP: Lys195 and Thr217. Residue 266-267 participates in deamido-NAD(+) binding; the sequence is HK.

Belongs to the NAD synthetase family. Homodimer.

It carries out the reaction deamido-NAD(+) + NH4(+) + ATP = AMP + diphosphate + NAD(+) + H(+). The protein operates within cofactor biosynthesis; NAD(+) biosynthesis; NAD(+) from deamido-NAD(+) (ammonia route): step 1/1. Functionally, catalyzes the ATP-dependent amidation of deamido-NAD to form NAD. Uses ammonia as a nitrogen source. In Shewanella putrefaciens (strain CN-32 / ATCC BAA-453), this protein is NH(3)-dependent NAD(+) synthetase.